Consider the following 453-residue polypeptide: UDP-glycosyltransferase 76E1 (453 aa).

UDP-alpha-D-glucose contacts are provided by residues Ser-272, 331–333 (APQ), 348–356 (HCGWNSTLE), and 370–373 (TGDQ).

It belongs to the UDP-glycosyltransferase family.

Functionally, possesses low quercetin 3-O-glucosyltransferase and 7-O-glucosyltransferase activities in vitro. This is UDP-glycosyltransferase 76E1 (UGT76E1) from Arabidopsis thaliana (Mouse-ear cress).